Here is a 545-residue protein sequence, read N- to C-terminus: Tripartite motif-containing protein 26 (545 aa).

An RING-type zinc finger spans residues 16–57 (CSICLDYLRDPVTIDCGHVFCRSCTSDIRPISGNRPVCPLCK). The segment at 97–138 (QDMKLCERHQEKLHYYCEDDGKLLCVMCRESREHRPHTAVLV) adopts a B box-type zinc-finger fold. The Zn(2+) site is built by C102, H105, C124, and H130. Positions 197–243 (QFLKKREQHLLDQLATLEQLLTEGREKFKTRGVSELDRLTLVISELE) form a coiled coil. The region spanning 301–545 (RGLRQFQGKL…WPGARLLLRP (245 aa)) is the B30.2/SPRY domain. Residues 382–443 (REGWSEDEEE…EEEEEVQESC (62 aa)) form a disordered region. The segment covering 386–440 (SEDEEEGEEEEEGEEEEEDEEVGYGDGYEDWETDEEDESLGEEEEEEEEEEEEVQ) has biased composition (acidic residues).

It belongs to the TRIM/RBCC family. Interacts with TBK1; this interaction bridges together TBK1 and NEMO in order to activate TBK1. Interacts with INCA1. In terms of processing, autoubiquitinates upon viral infection. In turn, autoubiquitinated TRIM26 recruits NEMO and bridges TBK1-NEMO interaction.

It localises to the cytoplasm. Its subcellular location is the nucleus. It catalyses the reaction S-ubiquitinyl-[E2 ubiquitin-conjugating enzyme]-L-cysteine + [acceptor protein]-L-lysine = [E2 ubiquitin-conjugating enzyme]-L-cysteine + N(6)-ubiquitinyl-[acceptor protein]-L-lysine.. E3 ubiquitin-protein ligase which regulates the IFN-beta production and antiviral response downstream of various DNA-encoded pattern-recognition receptors (PRRs). Also plays a central role in determining the response to different forms of oxidative stress by controlling levels of DNA glycosylases NEIL1, NEIL3 and NTH1 that are involved in repair of damaged DNA. Promotes nuclear IRF3 ubiquitination and proteasomal degradation. Bridges together TBK1 and NEMO during the innate response to viral infection leading to the activation of TBK1. Positively regulates LPS-mediated inflammatory innate immune response by catalyzing the 'Lys-11'-linked polyubiquitination of TAB1 to enhance its activation and subsequent NF-kappa-B and MAPK signaling. In a manner independent of its catalytic activity, inhibits WWP2, a SOX2-directed E3 ubiquitin ligase, and thus protects SOX2 from polyubiquitination and proteasomal degradation. Ubiquitinates the histone acetyltransferase protein complex component PHF20 and thereby triggers its degradation in the nucleus after its recruitment by the histone demethylase KDM6B, serving as a scaffold protein. Upon induction by TGF-beta, ubiquitinates the TFIID component TAF7 for proteasomal degradation. Induces ferroptosis by ubiquitinating SLC7A11, a critical protein for lipid reactive oxygen species (ROS) scavenging. The chain is Tripartite motif-containing protein 26 (Trim26) from Mus musculus (Mouse).